We begin with the raw amino-acid sequence, 209 residues long: Ribosomal RNA small subunit methyltransferase G (209 aa).

Residues glycine 71, phenylalanine 76, 122 to 123 (AE), and arginine 135 each bind S-adenosyl-L-methionine.

It belongs to the methyltransferase superfamily. RNA methyltransferase RsmG family.

It localises to the cytoplasm. In terms of biological role, specifically methylates the N7 position of a guanine in 16S rRNA. The protein is Ribosomal RNA small subunit methyltransferase G of Flavobacterium psychrophilum (strain ATCC 49511 / DSM 21280 / CIP 103535 / JIP02/86).